A 225-amino-acid polypeptide reads, in one-letter code: Ribonuclease 3 (225 aa).

An RNase III domain is found at 7 to 129 (IPRLCRTLGY…IIGAIYLDSD (123 aa)). Glu-42 is a binding site for Mg(2+). Asp-46 is a catalytic residue. Mg(2+) is bound by residues Asp-115 and Glu-118. The active site involves Glu-118. Positions 155-225 (DPKTLLQEYL…AAQVLELIKK (71 aa)) constitute a DRBM domain.

Belongs to the ribonuclease III family. Homodimer. The cofactor is Mg(2+).

It is found in the cytoplasm. The enzyme catalyses Endonucleolytic cleavage to 5'-phosphomonoester.. In terms of biological role, digests double-stranded RNA. Involved in the processing of primary rRNA transcript to yield the immediate precursors to the large and small rRNAs (23S and 16S). Processes some mRNAs, and tRNAs when they are encoded in the rRNA operon. Processes pre-crRNA and tracrRNA of type II CRISPR loci if present in the organism. This Shewanella pealeana (strain ATCC 700345 / ANG-SQ1) protein is Ribonuclease 3.